The following is a 200-amino-acid chain: Recombination protein RecR (200 aa).

A C4-type zinc finger spans residues 59 to 74 (CEICGNIDTRSPCTVC). Positions 82–177 (SIIVVVADVA…KVTRLAHGVP (96 aa)) constitute a Toprim domain.

The protein belongs to the RecR family.

In terms of biological role, may play a role in DNA repair. It seems to be involved in an RecBC-independent recombinational process of DNA repair. It may act with RecF and RecO. The sequence is that of Recombination protein RecR from Nitrobacter hamburgensis (strain DSM 10229 / NCIMB 13809 / X14).